The following is a 196-amino-acid chain: Homeobox protein XENK-2 (196 aa).

Positions 48-72 (PSADESPDNDKELSSNPDSGKKRKR) are disordered. Residues 69–128 (KRKRRVLFSKAQTYELERRFRQQRYLSAPEREHLASLIRLTPTQVKIWFQNHRYKMKRAR) constitute a DNA-binding region (homeobox).

It belongs to the NK-2 homeobox family. Forebrain and midbrain.

The protein resides in the nucleus. Its function is as follows. Defines dorsal-ventral domains in developing brain. May play a role in defining positional information along the anterior-posterior (a/p) axis and the dorsal-ventral (d/v) axis of the developing nervous system. May be involved in determining positional or boundary information rather than determining a given cell type. This is Homeobox protein XENK-2 from Xenopus laevis (African clawed frog).